The chain runs to 60 residues: Large ribosomal subunit protein uL30 (60 aa).

The protein belongs to the universal ribosomal protein uL30 family. Part of the 50S ribosomal subunit.

In Levilactobacillus brevis (strain ATCC 367 / BCRC 12310 / CIP 105137 / JCM 1170 / LMG 11437 / NCIMB 947 / NCTC 947) (Lactobacillus brevis), this protein is Large ribosomal subunit protein uL30.